The primary structure comprises 301 residues: Pantothenate synthetase (301 aa).

Residue 30–37 (MGNLHEGH) coordinates ATP. The active-site Proton donor is the His-37. A (R)-pantoate-binding site is contributed by Gln-61. A beta-alanine-binding site is contributed by Gln-61. ATP is bound at residue 149–152 (GEKD). Gln-155 serves as a coordination point for (R)-pantoate. Residues Val-178 and 186–189 (MSSR) each bind ATP.

This sequence belongs to the pantothenate synthetase family. As to quaternary structure, homodimer.

Its subcellular location is the cytoplasm. It carries out the reaction (R)-pantoate + beta-alanine + ATP = (R)-pantothenate + AMP + diphosphate + H(+). It functions in the pathway cofactor biosynthesis; (R)-pantothenate biosynthesis; (R)-pantothenate from (R)-pantoate and beta-alanine: step 1/1. Functionally, catalyzes the condensation of pantoate with beta-alanine in an ATP-dependent reaction via a pantoyl-adenylate intermediate. The protein is Pantothenate synthetase of Vibrio vulnificus (strain CMCP6).